A 68-amino-acid chain; its full sequence is MPFINIKLVPENGGPTNEQKQQLIEGVSDLMVKVLNKNKASIVVIIDEVDSNNYGLGGESVHHLRQKN.

The Proton acceptor; via imino nitrogen role is filled by proline 2.

The protein belongs to the 4-oxalocrotonate tautomerase family.

This chain is Probable tautomerase HP_0924, found in Helicobacter pylori (strain ATCC 700392 / 26695) (Campylobacter pylori).